We begin with the raw amino-acid sequence, 570 residues long: Peptidyl-prolyl cis-trans isomerase FKBP9 (570 aa).

The signal sequence occupies residues 1 to 24; it reads MALGARGWRRRSLLLLLLWVTGQA. PPIase FKBP-type domains lie at 54-142, 166-254, 278-365, and 389-477; these read GDFV…VDIW, SDFV…LDLH, GDFL…IDFH, and GDYL…LELV. N-linked (GlcNAc...) asparagine glycosylation is found at Asn-174, Asn-286, Asn-302, and Asn-397. EF-hand domains follow at residues 488-523 and 533-568; these read WNGEVSPNLFEEIDRDGNGEVLLEEFSEYIHAQVAT and NAEMIVKNMFTNQDRNGDGKVTAEEFKLKDQEAKHD. The Ca(2+) site is built by Asp-501, Asp-503, Asn-505, Glu-507, Glu-512, Asp-546, Asn-548, Asp-550, Lys-552, and Glu-557. A Prevents secretion from ER motif is present at residues 567-570; sequence HDEL.

In terms of processing, phosphorylated. In terms of tissue distribution, predominantly expressed in heart, skeletal muscle, lung, liver and kidney. Lower levels found in brain, spleen and testis.

Its subcellular location is the endoplasmic reticulum lumen. The enzyme catalyses [protein]-peptidylproline (omega=180) = [protein]-peptidylproline (omega=0). Its activity is regulated as follows. Inhibited by FK506. PPIases accelerate the folding of proteins during protein synthesis. This Mus musculus (Mouse) protein is Peptidyl-prolyl cis-trans isomerase FKBP9 (Fkbp9).